A 339-amino-acid polypeptide reads, in one-letter code: Anthranilate phosphoribosyltransferase (339 aa).

5-phospho-alpha-D-ribose 1-diphosphate contacts are provided by residues G80, 83–84, T88, 90–93, 108–116, and S120; these read GD, NIST, and KHGNRAVSS. G80 lines the anthranilate pocket. S92 is a Mg(2+) binding site. N111 provides a ligand contact to anthranilate. Anthranilate is bound at residue R166. Residues D225 and E226 each contribute to the Mg(2+) site.

Belongs to the anthranilate phosphoribosyltransferase family. Homodimer. Mg(2+) is required as a cofactor.

It carries out the reaction N-(5-phospho-beta-D-ribosyl)anthranilate + diphosphate = 5-phospho-alpha-D-ribose 1-diphosphate + anthranilate. It participates in amino-acid biosynthesis; L-tryptophan biosynthesis; L-tryptophan from chorismate: step 2/5. Catalyzes the transfer of the phosphoribosyl group of 5-phosphorylribose-1-pyrophosphate (PRPP) to anthranilate to yield N-(5'-phosphoribosyl)-anthranilate (PRA). This is Anthranilate phosphoribosyltransferase from Caldanaerobacter subterraneus subsp. tengcongensis (strain DSM 15242 / JCM 11007 / NBRC 100824 / MB4) (Thermoanaerobacter tengcongensis).